The primary structure comprises 277 residues: MKKYRKILAMLAVLAIVLVLSGCSNTPITDKSTGFWDGLIILNFSRAIIWLSNLFGHSYGLGIIVFTLIIRIIILPLMIFQTRNMVAMQEVQPQMKALQKKYSSRDMETQQKLQAEMKKLYAKHGVHPMASMLPLLVQLPILIALYQAIWRTQALKTGSFLWLQLGSKDPYYVLPILAAIFTFASSWLAMKSQPEQNGMTTSMTYLMPVIILITAINVPSALSLYWVISNAFQVGQTLLLQNPFKINREREAKKQAERDRKRTLEKARKRAIRNHKR.

Residues 1–22 (MKKYRKILAMLAVLAIVLVLSG) form the signal peptide. C23 carries N-palmitoyl cysteine lipidation. C23 is lipidated: S-diacylglycerol cysteine. 5 helical membrane passes run 35-55 (FWDGLIILNFSRAIIWLSNLF), 60-80 (GLGIIVFTLIIRIIILPLMIF), 130-150 (ASMLPLLVQLPILIALYQAIW), 170-190 (PYYVLPILAAIFTFASSWLAM), and 208-228 (PVIILITAINVPSALSLYWVI). Residues 251-266 (EAKKQAERDRKRTLEK) show a composition bias toward basic and acidic residues. The disordered stretch occupies residues 251-277 (EAKKQAERDRKRTLEKARKRAIRNHKR). The span at 267-277 (ARKRAIRNHKR) shows a compositional bias: basic residues.

The protein belongs to the OXA1/ALB3/YidC family. Type 2 subfamily.

It localises to the cell membrane. Required for the insertion and/or proper folding and/or complex formation of integral membrane proteins into the membrane. Involved in integration of membrane proteins that insert both dependently and independently of the Sec translocase complex, as well as at least some lipoproteins. This chain is Membrane protein insertase YidC 2, found in Lactiplantibacillus plantarum (strain ATCC BAA-793 / NCIMB 8826 / WCFS1) (Lactobacillus plantarum).